A 51-amino-acid chain; its full sequence is MDNTLLSLTHEQQQQAVQQIQQLVQQGISSGEAIAIVAQQLRDTHQKSEEK.

Belongs to the UPF0181 family.

In Glaesserella parasuis serovar 5 (strain SH0165) (Haemophilus parasuis), this protein is UPF0181 protein HAPS_0710.